We begin with the raw amino-acid sequence, 204 residues long: MLRSRRLALLCLATPLWLAACASVTPTRGFDASETAASQLYTGRFSANYVRYGRNEGVQGSFRWQEQGRNVRLDLVSPLGQTLAIVTATPSGATLDLPNEAPRNAPEVDSLMEQALGFSLPVSGMRDWLHGRAAPGTPSNVTRDANGRPDTLRQSGWTVRYLAWQDTPENATPTTTLPRRIDMARDGNESPLSVRLVIDPENKE.

The signal sequence occupies residues methionine 1–alanine 20. Residue cysteine 21 is the site of N-palmitoyl cysteine attachment. A lipid anchor (S-diacylglycerol cysteine) is attached at cysteine 21. The tract at residues glycine 131 to aspartate 150 is disordered.

Belongs to the LolB family. Monomer.

It localises to the cell outer membrane. Its function is as follows. Plays a critical role in the incorporation of lipoproteins in the outer membrane after they are released by the LolA protein. This chain is Outer-membrane lipoprotein LolB, found in Cupriavidus metallidurans (strain ATCC 43123 / DSM 2839 / NBRC 102507 / CH34) (Ralstonia metallidurans).